Reading from the N-terminus, the 175-residue chain is MSINIRDPLIVSRVVGDVLDPFNRSITLKVTYGQREVTNGLDLRPSQVQNKPRVEIGGEDLRNFYTLVMVDPDVPSPSNPHLREYLHWLVTDIPATTGTTFGNEIVCYENPSPTAGIHRVVFILFRQLGRQTVYAPGWRQNFNTREFAEIYNLGLPVAAVFYNCQRESGCGGRRL.

The protein belongs to the phosphatidylethanolamine-binding protein family. Interacts with FD/BZIP14 and FDP/BZIP27. Interacts with FTIP1/MCTP1 in phloem companion cells. Interacts with NAKR1. As to expression, mostly localized in leaves vasculature.

It localises to the cytoplasm. Its subcellular location is the nucleus. The protein resides in the endoplasmic reticulum. Component of the mobile flower-promoting signal (floral stimulus or florigen). Promotes the transition from vegetative growth to flowering. Required for 'SEPALLATA3' (SEP3) and 'FRUITFULL' (FUL) accumulation in mature rosette leaves. Seems to acts in parallel with 'LEAFY' to induce flowering by regulating 'APETALA1'. Translated in leaves and then transported to the shoot apical meristem where it activates the transcription of several floral meristem identity genes. May play a role in both the autonomous and the long-day flowering pathways. In Arabidopsis thaliana (Mouse-ear cress), this protein is Protein FLOWERING LOCUS T.